Consider the following 194-residue polypeptide: Probable GTP-binding protein EngB (194 aa).

An EngB-type G domain is found at 23–194 (LNGEFVFVGR…YELIEIFGGV (172 aa)). GTP contacts are provided by residues 31 to 38 (GRSNVGKS), 57 to 61 (GKTAS), 75 to 78 (DLPG), 143 to 146 (TKMD), and 173 to 175 (YSA). The Mg(2+) site is built by Ser38 and Thr59.

The protein belongs to the TRAFAC class TrmE-Era-EngA-EngB-Septin-like GTPase superfamily. EngB GTPase family. It depends on Mg(2+) as a cofactor.

Functionally, necessary for normal cell division and for the maintenance of normal septation. This chain is Probable GTP-binding protein EngB, found in Thermosipho africanus (strain TCF52B).